Here is a 483-residue protein sequence, read N- to C-terminus: Regulatory protein ViaA (483 aa).

It belongs to the ViaA family. Homodimer. Interacts with RavA.

Its subcellular location is the cytoplasm. Its function is as follows. Component of the RavA-ViaA chaperone complex, which may act on the membrane to optimize the function of some of the respiratory chains. ViaA stimulates the ATPase activity of RavA. The chain is Regulatory protein ViaA from Escherichia coli O17:K52:H18 (strain UMN026 / ExPEC).